The primary structure comprises 236 residues: Small ribosomal subunit protein uS2c (236 aa).

This sequence belongs to the universal ribosomal protein uS2 family.

It localises to the plastid. The protein localises to the chloroplast. This chain is Small ribosomal subunit protein uS2c (rps2), found in Draba nemorosa (Woodland whitlowgrass).